Consider the following 131-residue polypeptide: Agouti-signaling protein (131 aa).

The first 22 residues, 1 to 22 (MDVTRLLLATLVGFLCFFTVHS), serve as a signal peptide directing secretion. Asn-39 carries N-linked (GlcNAc...) asparagine glycosylation. The interval 58 to 100 (KSKKISRKEAEKRKRSSKKKASMKKVARPPPPSPCVATRDSCK) is disordered. Over residues 70-84 (RKRSSKKKASMKKVA) the composition is skewed to basic residues. 5 disulfide bridges follow: Cys-92/Cys-107, Cys-99/Cys-113, Cys-106/Cys-124, Cys-110/Cys-131, and Cys-115/Cys-122. The 40-residue stretch at 92 to 131 (CVATRDSCKPPAPACCDPCASCQCRFFGSACTCRVLNPNC) folds into the Agouti domain.

In terms of tissue distribution, epithelial cells of the hair follicles and the epidermis.

It is found in the secreted. Involved in the regulation of melanogenesis. The binding of ASP to MC1R precludes alpha-MSH initiated signaling and thus blocks production of cAMP, leading to a down-regulation of eumelanogenesis (brown/black pigment) and thus increasing synthesis of pheomelanin (yellow/red pigment). Causes hair follicle melanocytes to synthesize phaeomelanin instead of black or brown pigment eumelanin and produces hairs with a subapical yellow band on an otherwise black or brown background when expressed during the mid-portion of hair growth. This is Agouti-signaling protein (Asip) from Mus musculus (Mouse).